Consider the following 394-residue polypeptide: Phosphopentomutase (394 aa).

Residues aspartate 14, aspartate 287, histidine 292, aspartate 328, histidine 329, and histidine 340 each coordinate Mn(2+).

Belongs to the phosphopentomutase family. Requires Mn(2+) as cofactor.

The protein resides in the cytoplasm. The catalysed reaction is 2-deoxy-alpha-D-ribose 1-phosphate = 2-deoxy-D-ribose 5-phosphate. It catalyses the reaction alpha-D-ribose 1-phosphate = D-ribose 5-phosphate. The protein operates within carbohydrate degradation; 2-deoxy-D-ribose 1-phosphate degradation; D-glyceraldehyde 3-phosphate and acetaldehyde from 2-deoxy-alpha-D-ribose 1-phosphate: step 1/2. Its function is as follows. Isomerase that catalyzes the conversion of deoxy-ribose 1-phosphate (dRib-1-P) and ribose 1-phosphate (Rib-1-P) to deoxy-ribose 5-phosphate (dRib-5-P) and ribose 5-phosphate (Rib-5-P), respectively. The polypeptide is Phosphopentomutase (Listeria innocua serovar 6a (strain ATCC BAA-680 / CLIP 11262)).